Reading from the N-terminus, the 129-residue chain is Putative F-box protein At3g42722 (129 aa).

Residues Met4 to Asn50 enclose the F-box domain.

The polypeptide is Putative F-box protein At3g42722 (Arabidopsis thaliana (Mouse-ear cress)).